We begin with the raw amino-acid sequence, 143 residues long: Transcriptional regulator SlyA (143 aa).

An HTH marR-type domain is found at 2 to 135 (ESTLGSDLAR…LSGLIDKLEK (134 aa)). The H-T-H motif DNA-binding region spans 49-72 (QIQLAKAIGIEQPSLVRTLDQLEE).

It belongs to the SlyA family. Homodimer.

Its function is as follows. Transcription regulator that can specifically activate or repress expression of target genes. The sequence is that of Transcriptional regulator SlyA from Yersinia pestis bv. Antiqua (strain Antiqua).